A 469-amino-acid polypeptide reads, in one-letter code: Argininosuccinate lyase (469 aa).

It belongs to the lyase 1 family. Argininosuccinate lyase subfamily.

The protein resides in the cytoplasm. The enzyme catalyses 2-(N(omega)-L-arginino)succinate = fumarate + L-arginine. It functions in the pathway amino-acid biosynthesis; L-arginine biosynthesis; L-arginine from L-ornithine and carbamoyl phosphate: step 3/3. This Cupriavidus metallidurans (strain ATCC 43123 / DSM 2839 / NBRC 102507 / CH34) (Ralstonia metallidurans) protein is Argininosuccinate lyase.